Reading from the N-terminus, the 179-residue chain is Segregation and condensation protein B (179 aa).

Belongs to the ScpB family. In terms of assembly, homodimer. Homodimerization may be required to stabilize the binding of ScpA to the Smc head domains. Component of a cohesin-like complex composed of ScpA, ScpB and the Smc homodimer, in which ScpA and ScpB bind to the head domain of Smc. The presence of the three proteins is required for the association of the complex with DNA.

Its subcellular location is the cytoplasm. Its function is as follows. Participates in chromosomal partition during cell division. May act via the formation of a condensin-like complex containing Smc and ScpA that pull DNA away from mid-cell into both cell halves. In Clostridioides difficile (strain 630) (Peptoclostridium difficile), this protein is Segregation and condensation protein B.